Here is a 349-residue protein sequence, read N- to C-terminus: MVRFIEENTKLVEKETGNKSNNDVTTTKKKALQDIIINNGVGLINSWVDSMRACSPTHLKSLLKQSSWLTEHPSALDMFEEILHLSEGKQIVMFLDYDGTLSPIVDDPDRAFMSRKMRRTVRKLANCFPTAIVSGRCIEKVYNFVKLTELYYAGSHGMDIKGPEQGSKYEQILQDSKSLLCQPATEFLPMIDEVYHKLVEKTKSTPGAQVENNKFCVSVHFRRVDENNWSDLANQVRSVMKDYPKLRLTQGRKVLEVRPIIKWDKGKALEFLLESLGYANCTDVFPLYIGDDRTDEDAFKVLRERRQGLGILVSKFPKETSASYSLQEPDEVMEFLQRLVEWKQLRSGA.

It belongs to the trehalose phosphatase family. Requires a divalent metal cation as cofactor.

It catalyses the reaction alpha,alpha-trehalose 6-phosphate + H2O = alpha,alpha-trehalose + phosphate. The protein operates within glycan biosynthesis; trehalose biosynthesis. In terms of biological role, removes the phosphate from trehalose 6-phosphate to produce free trehalose. Trehalose accumulation in plant may improve abiotic stress tolerance. The chain is Probable trehalose-phosphate phosphatase H (TPPH) from Arabidopsis thaliana (Mouse-ear cress).